A 348-amino-acid polypeptide reads, in one-letter code: Protein RecA (348 aa).

An ATP-binding site is contributed by 64-71 (GPESSGKT). The span at 325–335 (YEIDGASKEPL) shows a compositional bias: basic and acidic residues. A disordered region spans residues 325-348 (YEIDGASKEPLEETEETLSLLDDE). The segment covering 336-348 (EETEETLSLLDDE) has biased composition (acidic residues).

The protein belongs to the RecA family.

Its subcellular location is the cytoplasm. Its function is as follows. Can catalyze the hydrolysis of ATP in the presence of single-stranded DNA, the ATP-dependent uptake of single-stranded DNA by duplex DNA, and the ATP-dependent hybridization of homologous single-stranded DNAs. It interacts with LexA causing its activation and leading to its autocatalytic cleavage. The polypeptide is Protein RecA (Listeria seeligeri).